The chain runs to 146 residues: Hemoglobin subunit beta (146 aa).

The Globin domain maps to 2–146 (HWSAEEKQLI…VAHALARKYH (145 aa)). Histidine 63 and histidine 92 together coordinate heme b.

The protein belongs to the globin family. In terms of assembly, heterotetramer of two alpha chains and two beta chains. As to expression, red blood cells.

Involved in oxygen transport from the lung to the various peripheral tissues. This is Hemoglobin subunit beta (HBB) from Phoenicopterus ruber (American flamingo).